The primary structure comprises 142 residues: Large ribosomal subunit protein uL13 (142 aa).

The protein belongs to the universal ribosomal protein uL13 family. In terms of assembly, part of the 50S ribosomal subunit.

Its function is as follows. This protein is one of the early assembly proteins of the 50S ribosomal subunit, although it is not seen to bind rRNA by itself. It is important during the early stages of 50S assembly. This Shewanella baltica (strain OS185) protein is Large ribosomal subunit protein uL13.